A 158-amino-acid chain; its full sequence is 2-C-methyl-D-erythritol 2,4-cyclodiphosphate synthase (158 aa).

2 residues coordinate a divalent metal cation: aspartate 8 and histidine 10. Residues 8–10 (DVH) and 34–35 (HS) contribute to the 4-CDP-2-C-methyl-D-erythritol 2-phosphate site. Histidine 42 provides a ligand contact to a divalent metal cation. 4-CDP-2-C-methyl-D-erythritol 2-phosphate contacts are provided by residues 56–58 (DIG), 132–135 (TTNE), and arginine 142.

It belongs to the IspF family. Homotrimer. A divalent metal cation is required as a cofactor.

The enzyme catalyses 4-CDP-2-C-methyl-D-erythritol 2-phosphate = 2-C-methyl-D-erythritol 2,4-cyclic diphosphate + CMP. It functions in the pathway isoprenoid biosynthesis; isopentenyl diphosphate biosynthesis via DXP pathway; isopentenyl diphosphate from 1-deoxy-D-xylulose 5-phosphate: step 4/6. Its function is as follows. Involved in the biosynthesis of isopentenyl diphosphate (IPP) and dimethylallyl diphosphate (DMAPP), two major building blocks of isoprenoid compounds. Catalyzes the conversion of 4-diphosphocytidyl-2-C-methyl-D-erythritol 2-phosphate (CDP-ME2P) to 2-C-methyl-D-erythritol 2,4-cyclodiphosphate (ME-CPP) with a corresponding release of cytidine 5-monophosphate (CMP). In Chlorobium phaeobacteroides (strain DSM 266 / SMG 266 / 2430), this protein is 2-C-methyl-D-erythritol 2,4-cyclodiphosphate synthase.